The chain runs to 126 residues: MDKAAVVVRTRKVLTNRLLSRKQFVVEVVHPGKANVSKKDLKTTIAKLHKVADPETIFLFGFKTDFGGGKSTGFGLIYDNLEIAKKYEPKYRLARAGLYTKPQTSRKQRKEKKNRLKKAGKKTAKK.

The tract at residues 98 to 126 (LYTKPQTSRKQRKEKKNRLKKAGKKTAKK) is disordered. The span at 104–126 (TSRKQRKEKKNRLKKAGKKTAKK) shows a compositional bias: basic residues.

It belongs to the eukaryotic ribosomal protein eS24 family.

This Dictyostelium discoideum (Social amoeba) protein is Small ribosomal subunit protein eS24 (rps24).